The chain runs to 328 residues: Malate dehydrogenase (328 aa).

An NAD(+)-binding site is contributed by 12 to 18 (GAAGQIG). Residues Arg93 and Arg99 each contribute to the substrate site. Residues Asn106, Gln113, and 130 to 132 (VGN) contribute to the NAD(+) site. The substrate site is built by Asn132 and Arg166. His191 (proton acceptor) is an active-site residue.

Belongs to the LDH/MDH superfamily. MDH type 2 family.

The catalysed reaction is (S)-malate + NAD(+) = oxaloacetate + NADH + H(+). In terms of biological role, catalyzes the reversible oxidation of malate to oxaloacetate. This chain is Malate dehydrogenase, found in Dechloromonas aromatica (strain RCB).